The sequence spans 405 residues: L-carnitine CoA-transferase (405 aa).

Residues K97 and R104 each contribute to the CoA site. D169 (nucleophile) is an active-site residue.

It belongs to the CoA-transferase III family. CaiB subfamily. In terms of assembly, homodimer.

The protein localises to the cytoplasm. It carries out the reaction crotonobetainyl-CoA + (R)-carnitine = crotonobetaine + (R)-carnitinyl-CoA. It catalyses the reaction 4-(trimethylamino)butanoyl-CoA + (R)-carnitine = (R)-carnitinyl-CoA + 4-(trimethylamino)butanoate. It participates in amine and polyamine metabolism; carnitine metabolism. Its function is as follows. Catalyzes the reversible transfer of the CoA moiety from gamma-butyrobetainyl-CoA to L-carnitine to generate L-carnitinyl-CoA and gamma-butyrobetaine. Is also able to catalyze the reversible transfer of the CoA moiety from gamma-butyrobetainyl-CoA or L-carnitinyl-CoA to crotonobetaine to generate crotonobetainyl-CoA. The chain is L-carnitine CoA-transferase from Escherichia coli O139:H28 (strain E24377A / ETEC).